The chain runs to 448 residues: Trigger factor (448 aa).

One can recognise a PPIase FKBP-type domain in the interval 172–257 (GDRVTVDFVG…MKKIEWPHLP (86 aa)).

It belongs to the FKBP-type PPIase family. Tig subfamily.

Its subcellular location is the cytoplasm. The enzyme catalyses [protein]-peptidylproline (omega=180) = [protein]-peptidylproline (omega=0). Functionally, involved in protein export. Acts as a chaperone by maintaining the newly synthesized protein in an open conformation. Functions as a peptidyl-prolyl cis-trans isomerase. In Burkholderia lata (strain ATCC 17760 / DSM 23089 / LMG 22485 / NCIMB 9086 / R18194 / 383), this protein is Trigger factor.